The primary structure comprises 103 residues: MNRPWKKSDDHVRLAIRLTPNGGRDAIDGAETDGEGEAYLKTRVTTVPEKGKANKALILLIAKSLGIAKSSVSLVSGDTARKKILRIDGDPEDLGKKLETLLG.

It belongs to the UPF0235 family.

The sequence is that of UPF0235 protein Rleg2_3707 from Rhizobium leguminosarum bv. trifolii (strain WSM2304).